The primary structure comprises 360 residues: D-alanine--D-alanine ligase (360 aa).

Residues 146-352 (KLCAVQAGIH…FTELIDRLVR (207 aa)) form the ATP-grasp domain. 179–234 (KKRFAPPFFVKPANLGSSVGIAKIHSFDELENALDEACRLDVKILVEKAIEGREVE) contributes to the ATP binding site. Asp305, Glu319, and Asn321 together coordinate Mg(2+).

Belongs to the D-alanine--D-alanine ligase family. Requires Mg(2+) as cofactor. It depends on Mn(2+) as a cofactor.

It localises to the cytoplasm. The enzyme catalyses 2 D-alanine + ATP = D-alanyl-D-alanine + ADP + phosphate + H(+). It functions in the pathway cell wall biogenesis; peptidoglycan biosynthesis. Functionally, cell wall formation. This chain is D-alanine--D-alanine ligase, found in Chlorobium phaeobacteroides (strain BS1).